We begin with the raw amino-acid sequence, 394 residues long: Probable dual specificity protein phosphatase DDB_G0281963 (394 aa).

The region spanning 2 to 142 (NDVSRIFPGF…LKKYELILKK (141 aa)) is the Tyrosine-protein phosphatase domain. Cys86 acts as the Phosphocysteine intermediate in catalysis. Residues 147 to 191 (PQIVEKESEEEDDDEDDDDDDYDSDEDDDDDSEDDDFEEEFDNVV) form a disordered region. Acidic residues predominate over residues 153–188 (ESEEEDDDEDDDDDDYDSDEDDDDDSEDDDFEEEFD).

This sequence belongs to the protein-tyrosine phosphatase family. Non-receptor class dual specificity subfamily.

The enzyme catalyses O-phospho-L-tyrosyl-[protein] + H2O = L-tyrosyl-[protein] + phosphate. It carries out the reaction O-phospho-L-seryl-[protein] + H2O = L-seryl-[protein] + phosphate. It catalyses the reaction O-phospho-L-threonyl-[protein] + H2O = L-threonyl-[protein] + phosphate. Functionally, has a dual specificity toward Ser/Thr and Tyr-containing proteins. This is Probable dual specificity protein phosphatase DDB_G0281963 from Dictyostelium discoideum (Social amoeba).